Here is a 467-residue protein sequence, read N- to C-terminus: Megakaryocyte-associated tyrosine-protein kinase (467 aa).

A disordered region spans residues 1-20 (MPTQRWAPGTQCMTKCENSR). Positions 7–69 (APGTQCMTKC…AAAALRQREA (63 aa)) constitute an SH3 domain. The 90-residue stretch at 81–170 (WFHGKISGQE…AICTKLVKPK (90 aa)) folds into the SH2 domain. One can recognise a Protein kinase domain in the interval 194–443 (LTLGAQIGEG…IVEKLGRELR (250 aa)). Residues 200 to 208 (IGEGEFGAV) and Lys221 contribute to the ATP site. The active-site Proton acceptor is Asp311. The segment at 445-467 (VGVAAPAGGQEAEGSAPTRSQDP) is disordered.

This sequence belongs to the protein kinase superfamily. Tyr protein kinase family. CSK subfamily. As to quaternary structure, interacts with KIT. In terms of tissue distribution, enriched in lymphoid tissues.

Its subcellular location is the cytoplasm. It localises to the membrane. It catalyses the reaction L-tyrosyl-[protein] + ATP = O-phospho-L-tyrosyl-[protein] + ADP + H(+). Could play a significant role in the signal transduction of hematopoietic cells. May regulate tyrosine kinase activity of SRC-family members in brain. This chain is Megakaryocyte-associated tyrosine-protein kinase (Matk), found in Rattus norvegicus (Rat).